The primary structure comprises 916 residues: Isoleucine--tRNA ligase (916 aa).

The short motif at 57 to 67 is the 'HIGH' region element; sequence PYANGNLHMGH. Residue Glu554 coordinates L-isoleucyl-5'-AMP. Residues 595 to 599 carry the 'KMSKS' region motif; the sequence is KMSKS. Residue Lys598 participates in ATP binding. The Zn(2+) site is built by Cys885, Cys888, Cys905, and Cys908.

It belongs to the class-I aminoacyl-tRNA synthetase family. IleS type 1 subfamily. As to quaternary structure, monomer. Zn(2+) serves as cofactor.

Its subcellular location is the cytoplasm. It catalyses the reaction tRNA(Ile) + L-isoleucine + ATP = L-isoleucyl-tRNA(Ile) + AMP + diphosphate. In terms of biological role, catalyzes the attachment of isoleucine to tRNA(Ile). As IleRS can inadvertently accommodate and process structurally similar amino acids such as valine, to avoid such errors it has two additional distinct tRNA(Ile)-dependent editing activities. One activity is designated as 'pretransfer' editing and involves the hydrolysis of activated Val-AMP. The other activity is designated 'posttransfer' editing and involves deacylation of mischarged Val-tRNA(Ile). In Staphylococcus epidermidis (strain ATCC 35984 / DSM 28319 / BCRC 17069 / CCUG 31568 / BM 3577 / RP62A), this protein is Isoleucine--tRNA ligase (ileS).